The chain runs to 396 residues: Elongation factor Tu (396 aa).

The 195-residue stretch at 11–205 (KPHVNIGTIG…VIDDYIPTPK (195 aa)) folds into the tr-type G domain. Positions 20 to 27 (GHVDHGKT) are G1. Residue 20-27 (GHVDHGKT) participates in GTP binding. Thr-27 provides a ligand contact to Mg(2+). Residues 61-65 (GITIN) are G2. The G3 stretch occupies residues 82–85 (DAPG). GTP contacts are provided by residues 82 to 86 (DAPGH) and 137 to 140 (NKTD). The tract at residues 137–140 (NKTD) is G4. Residues 175 to 177 (SAL) form a G5 region.

This sequence belongs to the TRAFAC class translation factor GTPase superfamily. Classic translation factor GTPase family. EF-Tu/EF-1A subfamily. As to quaternary structure, monomer.

The protein resides in the cytoplasm. The enzyme catalyses GTP + H2O = GDP + phosphate + H(+). In terms of biological role, GTP hydrolase that promotes the GTP-dependent binding of aminoacyl-tRNA to the A-site of ribosomes during protein biosynthesis. This Limosilactobacillus reuteri (strain DSM 20016) (Lactobacillus reuteri) protein is Elongation factor Tu.